A 395-amino-acid polypeptide reads, in one-letter code: MFRTLDDANVQSKRVLVRIDLNVPMANGEVTDLTRIERIVPTIAELSRKGAKVILLAHFGRPKGVASDENSLKHVVKPLSKVLDHSVHFAEDCIGDKAKAAVDALKDGDVLLLENTRFHKGEEKNDPEFVQALAANGDLYVNDAFSAAHRAHASTEGLAHVLPAFAGRAMQAELEALEKGLGNPARPVVAIVGGAKVSTKLDLLSNLIEKVDALVIGGGMANTFLAAKGLDVGKSLCEHELASTAREIMAKAETTKCAIILPVDAVVGWHFAADTPHQTYGVDSVPGDAMILDAGELSTDLIASAIDDAATLVWNGPLGAFELRPFDTATVKVARHVAKRTKEGKLVSVGGGGDTVAALNHAGVVDDFTYISTAGGAFLEWMEGKPLPSVDVLKK.

Substrate contacts are provided by residues 20–22 (DLN), Arg-35, 58–61 (HFGR), Arg-117, and Arg-150. ATP contacts are provided by residues Lys-200, Glu-322, and 352–355 (GGDT).

This sequence belongs to the phosphoglycerate kinase family. In terms of assembly, monomer.

It localises to the cytoplasm. It catalyses the reaction (2R)-3-phosphoglycerate + ATP = (2R)-3-phospho-glyceroyl phosphate + ADP. It functions in the pathway carbohydrate degradation; glycolysis; pyruvate from D-glyceraldehyde 3-phosphate: step 2/5. The chain is Phosphoglycerate kinase from Brucella suis biovar 1 (strain 1330).